Here is a 381-residue protein sequence, read N- to C-terminus: Phthiodiolone/phenolphthiodiolone dimycocerosates ketoreductase (381 aa).

The protein belongs to the mer family. Phthiodiolone/phenolphthiodiolone dimycocerosates ketoreductase subfamily.

Catalyzes the reduction of the keto moiety of phthiodiolone dimycocerosates (DIM B) and glycosylated phenolphthiodiolone dimycocerosates to form the intermediate compounds phthiotriol and glycosylated phenolphthiotriol dimycocerosates during phthiocerol dimycocerosates (DIM A) and glycosylated phenolphthiocerol dimycocerosates (PGL) biosynthesis. In Mycobacterium bovis (strain ATCC BAA-935 / AF2122/97), this protein is Phthiodiolone/phenolphthiodiolone dimycocerosates ketoreductase.